The primary structure comprises 144 residues: Putative sugar phosphate isomerase RT0290 (144 aa).

Histidine 12 is a substrate binding site. Histidine 101 acts as the Proton donor in catalysis. A substrate-binding site is contributed by arginine 135.

This sequence belongs to the LacAB/RpiB family.

This is Putative sugar phosphate isomerase RT0290 from Rickettsia typhi (strain ATCC VR-144 / Wilmington).